The chain runs to 391 residues: Anhydro-N-acetylmuramic acid kinase (391 aa).

Residue 9–16 coordinates ATP; that stretch reads GTSVDGID.

Belongs to the anhydro-N-acetylmuramic acid kinase family.

The enzyme catalyses 1,6-anhydro-N-acetyl-beta-muramate + ATP + H2O = N-acetyl-D-muramate 6-phosphate + ADP + H(+). It participates in amino-sugar metabolism; 1,6-anhydro-N-acetylmuramate degradation. The protein operates within cell wall biogenesis; peptidoglycan recycling. Its function is as follows. Catalyzes the specific phosphorylation of 1,6-anhydro-N-acetylmuramic acid (anhMurNAc) with the simultaneous cleavage of the 1,6-anhydro ring, generating MurNAc-6-P. Is required for the utilization of anhMurNAc either imported from the medium or derived from its own cell wall murein, and thus plays a role in cell wall recycling. The sequence is that of Anhydro-N-acetylmuramic acid kinase from Gloeothece citriformis (strain PCC 7424) (Cyanothece sp. (strain PCC 7424)).